A 159-amino-acid chain; its full sequence is Putative 4-hydroxy-4-methyl-2-oxoglutarate aldolase (159 aa).

Substrate contacts are provided by residues 74 to 77 (GDNL) and arginine 96. Aspartate 97 is an a divalent metal cation binding site.

Belongs to the class II aldolase/RraA-like family. As to quaternary structure, homotrimer. Requires a divalent metal cation as cofactor.

The catalysed reaction is 4-hydroxy-4-methyl-2-oxoglutarate = 2 pyruvate. It catalyses the reaction oxaloacetate + H(+) = pyruvate + CO2. Functionally, catalyzes the aldol cleavage of 4-hydroxy-4-methyl-2-oxoglutarate (HMG) into 2 molecules of pyruvate. Also contains a secondary oxaloacetate (OAA) decarboxylase activity due to the common pyruvate enolate transition state formed following C-C bond cleavage in the retro-aldol and decarboxylation reactions. The protein is Putative 4-hydroxy-4-methyl-2-oxoglutarate aldolase of Bacillus anthracis.